Reading from the N-terminus, the 106-residue chain is Transcription initiation factor IIA subunit 2 (106 aa).

The protein belongs to the TFIIA subunit 2 family. In terms of assembly, TFIIA is a heterodimer of the large unprocessed subunit 1 and a small subunit gamma. It was originally believed to be a heterotrimer of an alpha, a beta and a gamma subunit.

The protein resides in the nucleus. Its function is as follows. TFIIA is a component of the transcription machinery of RNA polymerase II and plays an important role in transcriptional activation. TFIIA in a complex with TBP mediates transcriptional activity. In Arabidopsis thaliana (Mouse-ear cress), this protein is Transcription initiation factor IIA subunit 2 (TFIIA-S).